Consider the following 433-residue polypeptide: tRNA modification GTPase MnmE (433 aa).

The (6S)-5-formyl-5,6,7,8-tetrahydrofolate site is built by Arg24, Glu86, and Lys125. Residues 218 to 363 (GARLALIGAP…LKEALREALL (146 aa)) form the TrmE-type G domain. K(+) is bound at residue Asn228. GTP is bound by residues 228-233 (NAGKSS), 247-253 (SPIPGTT), and 272-275 (DTAG). Ser232 serves as a coordination point for Mg(2+). Residues Ser247, Ile249, and Thr252 each contribute to the K(+) site. Thr253 serves as a coordination point for Mg(2+). Lys433 is a (6S)-5-formyl-5,6,7,8-tetrahydrofolate binding site.

The protein belongs to the TRAFAC class TrmE-Era-EngA-EngB-Septin-like GTPase superfamily. TrmE GTPase family. As to quaternary structure, homodimer. Heterotetramer of two MnmE and two MnmG subunits. K(+) serves as cofactor.

Its subcellular location is the cytoplasm. In terms of biological role, exhibits a very high intrinsic GTPase hydrolysis rate. Involved in the addition of a carboxymethylaminomethyl (cmnm) group at the wobble position (U34) of certain tRNAs, forming tRNA-cmnm(5)s(2)U34. This Thermus thermophilus (strain ATCC BAA-163 / DSM 7039 / HB27) protein is tRNA modification GTPase MnmE.